The following is a 296-amino-acid chain: tRNA dimethylallyltransferase (296 aa).

Residue 19–26 participates in ATP binding; sequence GPTASGKS. 21–26 provides a ligand contact to substrate; it reads TASGKS.

This sequence belongs to the IPP transferase family. In terms of assembly, monomer. Mg(2+) serves as cofactor.

The enzyme catalyses adenosine(37) in tRNA + dimethylallyl diphosphate = N(6)-dimethylallyladenosine(37) in tRNA + diphosphate. Functionally, catalyzes the transfer of a dimethylallyl group onto the adenine at position 37 in tRNAs that read codons beginning with uridine, leading to the formation of N6-(dimethylallyl)adenosine (i(6)A). This chain is tRNA dimethylallyltransferase, found in Dinoroseobacter shibae (strain DSM 16493 / NCIMB 14021 / DFL 12).